The following is a 345-amino-acid chain: cAMP-responsive element modulator (345 aa).

One can recognise a KID domain in the interval 88-147 (VQVAAIAETDESAESEGVIDSHKRREILSRRPSYRKILNELSSDVPGVPKIEEERSEEEG). Phosphoserine is present on residues S102, S129, S271, S274, and S277. Residues 286–345 (TRKRELRLMKNREAAKECRRRKKEYVKCLESRVAVLEVQNKKLIEELETLKDICSPKTDY) enclose the bZIP domain. A basic motif region spans residues 287–312 (RKRELRLMKNREAAKECRRRKKEYVK). The leucine-zipper stretch occupies residues 314–335 (LESRVAVLEVQNKKLIEELETL).

Belongs to the bZIP family. Binds DNA as a dimer. Interacts with FHL5. Interacts with CDC34. May interact with TSSK4. Post-translationally, isoform 9 is ubiquitinated by CDC34 and RAD6B in order to be degraded by the proteasome. In terms of processing, stimulated by phosphorylation. Phosphorylated on Ser-116 by TSSK4 in vitro. As to expression, expressed in testes (round spermatids) (at protein level). Isoform 14 is the major activator form in testes.

It localises to the nucleus. The protein localises to the cytoplasm. Functionally, transcriptional regulator that binds the cAMP response element (CRE), a sequence present in many viral and cellular promoters. Isoforms are either transcriptional activators or repressors. Plays a role in spermatogenesis and is involved in spermatid maturation. Its function is as follows. May play a role in the regulation of the circadian clock: acts as a transcriptional repressor of the core circadian component PER1 by directly binding to cAMP response elements in its promoter. The chain is cAMP-responsive element modulator from Homo sapiens (Human).